A 148-amino-acid polypeptide reads, in one-letter code: Calmodulin-related protein 97A (148 aa).

EF-hand domains lie at 7 to 42 (EQIA…LGQN), 43 to 78 (PTEA…QMRE), 80 to 115 (DTEE…LGEK), and 116 to 148 (VTDE…ISQK). Ca(2+)-binding residues include aspartate 20, threonine 24, lysine 26, glutamate 31, asparagine 58, asparagine 60, glutamine 62, glutamate 67, aspartate 93, aspartate 95, aspartate 97, glutamate 104, aspartate 129, aspartate 131, aspartate 133, methionine 135, and glutamate 140.

The protein belongs to the calmodulin family.

Its function is as follows. May be involved in calcium-mediated signal transduction. This Drosophila melanogaster (Fruit fly) protein is Calmodulin-related protein 97A (Acam).